Here is a 159-residue protein sequence, read N- to C-terminus: Cyclic pyranopterin monophosphate synthase (159 aa).

Substrate-binding positions include 76 to 78 and 114 to 115; these read LCH and ME. Asp-129 is an active-site residue.

Belongs to the MoaC family. Homohexamer; trimer of dimers.

It catalyses the reaction (8S)-3',8-cyclo-7,8-dihydroguanosine 5'-triphosphate = cyclic pyranopterin phosphate + diphosphate. Its pathway is cofactor biosynthesis; molybdopterin biosynthesis. In terms of biological role, catalyzes the conversion of (8S)-3',8-cyclo-7,8-dihydroguanosine 5'-triphosphate to cyclic pyranopterin monophosphate (cPMP). This chain is Cyclic pyranopterin monophosphate synthase, found in Shewanella oneidensis (strain ATCC 700550 / JCM 31522 / CIP 106686 / LMG 19005 / NCIMB 14063 / MR-1).